A 116-amino-acid polypeptide reads, in one-letter code: MTNAPVFGADVLARVADTLETRLPQNGGDPQTSYAAKLLAKGPDAFLKKIGEEATELVMAAKDGRPERIVSETADLWFHCLVTLAHYNLRPEDVLAELARREGLSGLEEKARRPAD.

This sequence belongs to the PRA-PH family.

The protein localises to the cytoplasm. It carries out the reaction 1-(5-phospho-beta-D-ribosyl)-ATP + H2O = 1-(5-phospho-beta-D-ribosyl)-5'-AMP + diphosphate + H(+). Its pathway is amino-acid biosynthesis; L-histidine biosynthesis; L-histidine from 5-phospho-alpha-D-ribose 1-diphosphate: step 2/9. The polypeptide is Phosphoribosyl-ATP pyrophosphatase (Bordetella avium (strain 197N)).